The sequence spans 318 residues: Malonyl-S-ACP:biotin-protein carboxyltransferase MADC (318 aa).

In terms of domain architecture, CoA carboxyltransferase N-terminal spans 2–257 (AKWTELQDKS…VLQKPMEEIE (256 aa)).

Its subcellular location is the cytoplasm. The enzyme catalyses N(6)-biotinyl-L-lysyl-[protein] + malonyl-[ACP] = N(6)-carboxybiotinyl-L-lysyl-[protein] + acetyl-[ACP]. Its function is as follows. Gamma subunit of the biotin-dependent malonate decarboxylase multienzyme complex (EC 7.2.4.4). The two subunits MADC and MADD are required for the transfer of the malonate carboxy group from the acyl-carrier protein (ACP) to the prosthetic group of the biotin carrier MADF. Required for the regeneration of ACP. This chain is Malonyl-S-ACP:biotin-protein carboxyltransferase MADC (madC), found in Malonomonas rubra.